The chain runs to 396 residues: Apurinic-apyrimidinic endonuclease (396 aa).

Basic residues predominate over residues 31–41 (KGRGKIQKHIQ). The tract at residues 31–100 (KGRGKIQKHI…TSGETIAQKK (70 aa)) is disordered. The segment covering 55–70 (NQSPGTTVEETLTEEN) has biased composition (polar residues). Basic and acidic residues predominate over residues 72 to 85 (STDKEETSKLENKP). Zn(2+) is bound by residues His185, His225, Glu261, Asp295, His298, His332, Asp345, His347, and Glu377.

The protein belongs to the AP endonuclease 2 family. It depends on Zn(2+) as a cofactor.

The protein localises to the nucleus. The polypeptide is Apurinic-apyrimidinic endonuclease (apn-1) (Caenorhabditis elegans).